Here is a 180-residue protein sequence, read N- to C-terminus: NADH-quinone oxidoreductase subunit I (180 aa).

4Fe-4S ferredoxin-type domains are found at residues 48-80 (IVLT…LQKA) and 90-119 (EFFR…LTPD). Cysteine 60, cysteine 63, cysteine 66, cysteine 70, cysteine 99, cysteine 102, cysteine 105, and cysteine 109 together coordinate [4Fe-4S] cluster.

It belongs to the complex I 23 kDa subunit family. As to quaternary structure, NDH-1 is composed of 13 different subunits. Subunits NuoA, H, J, K, L, M, N constitute the membrane sector of the complex. Requires [4Fe-4S] cluster as cofactor.

It is found in the cell inner membrane. The enzyme catalyses a quinone + NADH + 5 H(+)(in) = a quinol + NAD(+) + 4 H(+)(out). Functionally, NDH-1 shuttles electrons from NADH, via FMN and iron-sulfur (Fe-S) centers, to quinones in the respiratory chain. The immediate electron acceptor for the enzyme in this species is believed to be ubiquinone. Couples the redox reaction to proton translocation (for every two electrons transferred, four hydrogen ions are translocated across the cytoplasmic membrane), and thus conserves the redox energy in a proton gradient. This chain is NADH-quinone oxidoreductase subunit I, found in Cronobacter sakazakii (strain ATCC BAA-894) (Enterobacter sakazakii).